The sequence spans 546 residues: (+)-epi-alpha-bisabolol synthase (546 aa).

Mg(2+) is bound by residues Asp-297, Asp-301, Asp-441, Thr-445, and Glu-449. The DDXXD motif signature appears at 297–301 (DDIYD).

This sequence belongs to the terpene synthase family. It depends on Mg(2+) as a cofactor.

It catalyses the reaction (2E,6E)-farnesyl diphosphate + H2O = (+)-epi-alpha-bisabolol + diphosphate. The protein operates within secondary metabolite biosynthesis; terpenoid biosynthesis. Sesquiterpene synthase involved in the biosynthesis of (+)-epi-alpha-bisabolol, a precursor of the natural sweetner hernandulcin. The protein is (+)-epi-alpha-bisabolol synthase of Phyla dulcis (Aztec sweet herb).